Here is a 231-residue protein sequence, read N- to C-terminus: MITMNYDPKIIERGKLYYRNNLVKYCIKYKNFLFGEVVGSDTYKVKVDLDNNYFGLCTCQYKYNCKHAYALIEAYENNNYVDAEEIFKEIEDKPKEEILKILKNLVVKYYLWDEFLNTDSLLNKAIGLIKLIPLERKNIYTFKSFLRNQFVKNADDEELIKVIDEMIRADLDFNNSDIIEALTIILDEIFRRENKEAIKKLINLYRKHKKELWIVGDYLIEYYDNYFDYED.

The segment at 43-76 (YKVKVDLDNNYFGLCTCQYKYNCKHAYALIEAYE) adopts an SWIM-type zinc-finger fold.

This is an uncharacterized protein from Methanocaldococcus jannaschii (strain ATCC 43067 / DSM 2661 / JAL-1 / JCM 10045 / NBRC 100440) (Methanococcus jannaschii).